A 278-amino-acid polypeptide reads, in one-letter code: Elongation factor Ts 2, mitochondrial (278 aa).

It belongs to the EF-Ts family.

The protein localises to the mitochondrion. Associates with the EF-Tu.GDP complex and induces the exchange of GDP to GTP. It remains bound to the aminoacyl-tRNA.EF-Tu.GTP complex up to the GTP hydrolysis stage on the ribosome. The sequence is that of Elongation factor Ts 2, mitochondrial from Trypanosoma cruzi (strain CL Brener).